Reading from the N-terminus, the 279-residue chain is Digeranylgeranylglyceryl phosphate synthase (279 aa).

8 consecutive transmembrane segments (helical) span residues 5–25 (GFFA…AIVA), 27–47 (LIAT…VLLV), 90–110 (FLLG…IALV), 127–147 (FFGN…GGAY), 148–168 (AGWH…LAML), 198–218 (KTAL…AVPY), 219–239 (LWWG…ILFA), and 259–279 (TLLK…AVFL).

This sequence belongs to the UbiA prenyltransferase family. DGGGP synthase subfamily. It depends on Mg(2+) as a cofactor.

The protein resides in the cell membrane. It catalyses the reaction sn-3-O-(geranylgeranyl)glycerol 1-phosphate + (2E,6E,10E)-geranylgeranyl diphosphate = 2,3-bis-O-(geranylgeranyl)-sn-glycerol 1-phosphate + diphosphate. It functions in the pathway membrane lipid metabolism; glycerophospholipid metabolism. Prenyltransferase that catalyzes the transfer of the geranylgeranyl moiety of geranylgeranyl diphosphate (GGPP) to the C2 hydroxyl of (S)-3-O-geranylgeranylglyceryl phosphate (GGGP). This reaction is the second ether-bond-formation step in the biosynthesis of archaeal membrane lipids. The polypeptide is Digeranylgeranylglyceryl phosphate synthase (Methanoregula boonei (strain DSM 21154 / JCM 14090 / 6A8)).